The sequence spans 177 residues: Nucleoside triphosphate/diphosphate phosphatase (177 aa).

Arg23 acts as the Proton donor in catalysis. 6 residues coordinate Mg(2+): Asn87, Asp103, Asp105, Asp107, Asp120, and Glu123.

This sequence belongs to the Ntdp family. It depends on Mg(2+) as a cofactor.

The enzyme catalyses a ribonucleoside 5'-triphosphate + H2O = a ribonucleoside 5'-diphosphate + phosphate + H(+). It carries out the reaction a ribonucleoside 5'-diphosphate + H2O = a ribonucleoside 5'-phosphate + phosphate + H(+). In terms of biological role, has nucleoside phosphatase activity towards nucleoside triphosphates and nucleoside diphosphates. The chain is Nucleoside triphosphate/diphosphate phosphatase from Streptococcus pyogenes serotype M3 (strain ATCC BAA-595 / MGAS315).